Reading from the N-terminus, the 323-residue chain is MGNSASRSDFEWVYTDQPHTQRRKEILAKYPAIKALMRPDPRLKWAVLVLVLVQMLACWLVRGLAWRWLLFWAYAFGGCVNHSLTLAIHDISHNAAFGTGRAARNRWLAVFANLPVGVPYAASFKKYHVDHHRYLGGDGLDVDVPTRLEGWFFCTPARKLLWLVLQPFFYSLRPLCVHPKAVTRMEVLNTLVQLAADLAIFALWGLKPVVYLLASSFLGLGLHPISGHFVAEHYMFLKGHETYSYYGPLNWITFNVGYHVEHHDFPSIPGYNLPLVRKIAPEYYDHLPQHHSWVKVLWDFVFEDSLGPYARVKRVYRLAKDGL.

A lipid anchor (N-myristoyl glycine) is attached at glycine 2. 2 consecutive transmembrane segments (helical) span residues 45–65 and 68–88; these read WAVLVLVLVQMLACWLVRGLA and WLLFWAYAFGGCVNHSLTLAI. The Histidine box-1 signature appears at 89–93; that stretch reads HDISH. A required for C4-hydroxylase activity region spans residues 95–99; the sequence is AAFGT. The Histidine box-2 signature appears at 128–132; sequence HVDHH. Residues 210-231 form a helical membrane-spanning segment; it reads VYLLASSFLGLGLHPISGHFVA. The Histidine box-3 signature appears at 259-263; that stretch reads HVEHH.

It belongs to the fatty acid desaturase type 1 family. DEGS subfamily. As to expression, highly expressed in skin, intestine and kidney.

The protein resides in the endoplasmic reticulum membrane. It catalyses the reaction a dihydroceramide + 2 Fe(II)-[cytochrome b5] + O2 + 2 H(+) = a phytoceramide + 2 Fe(III)-[cytochrome b5] + H2O. It carries out the reaction an N-acylsphinganine + 2 Fe(II)-[cytochrome b5] + O2 + 2 H(+) = an N-acylsphing-4-enine + 2 Fe(III)-[cytochrome b5] + 2 H2O. The catalysed reaction is N-octanoylsphinganine + 2 Fe(II)-[cytochrome b5] + O2 + 2 H(+) = N-octanoyl-4-hydroxysphinganine + 2 Fe(III)-[cytochrome b5] + H2O. The enzyme catalyses an N-acylsphinganine + 2 Fe(II)-[cytochrome b5] + O2 + 2 H(+) = an N-acyl-(4R)-4-hydroxysphinganine + 2 Fe(III)-[cytochrome b5] + H2O. It functions in the pathway membrane lipid metabolism; sphingolipid biosynthesis. Functionally, bifunctional enzyme which acts both as a sphingolipid delta(4)-desaturase and a sphingolipid C4-monooxygenase. This chain is Sphingolipid delta(4)-desaturase/C4-monooxygenase DES2, found in Homo sapiens (Human).